The chain runs to 545 residues: Sphingosine-1-phosphate lyase (545 aa).

Topologically, residues 1–26 are lumenal; that stretch reads MRPFSGSDCLKPVTEGINRAFGAKEP. Residues 27 to 47 traverse the membrane as a helical; Signal-anchor for type III membrane protein segment; sequence WQVATITATTVLGGVWLWTVI. Topologically, residues 48-545 are cytoplasmic; sequence CQDENLYIRG…HSMYYTPSQK (498 aa). K342 bears the N6-(pyridoxal phosphate)lysine mark.

It belongs to the group II decarboxylase family. Sphingosine-1-phosphate lyase subfamily. It depends on pyridoxal 5'-phosphate as a cofactor. In terms of tissue distribution, localized to the developing gut primordium during embryogenesis.

It is found in the endoplasmic reticulum membrane. The enzyme catalyses sphinganine 1-phosphate = hexadecanal + phosphoethanolamine. It functions in the pathway lipid metabolism; sphingolipid metabolism. In terms of biological role, cleaves phosphorylated sphingoid bases (PSBs), such as sphingosine-1-phosphate, into fatty aldehydes and phosphoethanolamine. Sphingolipid catabolism is required for normal development including viability, reproduction and muscle development. The polypeptide is Sphingosine-1-phosphate lyase (Drosophila melanogaster (Fruit fly)).